We begin with the raw amino-acid sequence, 92 residues long: N(2)-fixation sustaining protein CowN (92 aa).

This sequence belongs to the CowN family.

Is required to sustain N(2)-dependent growth in the presence of low levels of carbon monoxide (CO). Probably acts by protecting the N(2) fixation ability of the nitrogenase complex, which is inactivated in the presence of CO. The polypeptide is N(2)-fixation sustaining protein CowN (Rhodopseudomonas palustris (strain ATCC BAA-98 / CGA009)).